Consider the following 298-residue polypeptide: Probable aspartoacylase (298 aa).

Residues His-13 and Glu-16 each contribute to the Zn(2+) site. Residues Arg-54 and Asn-61–Arg-62 contribute to the substrate site. Position 103 (His-103) interacts with Zn(2+). Glu-161 and Tyr-271 together coordinate substrate.

The protein belongs to the AspA/AstE family. Aspartoacylase subfamily. Zn(2+) serves as cofactor.

The catalysed reaction is an N-acyl-L-aspartate + H2O = a carboxylate + L-aspartate. The sequence is that of Probable aspartoacylase from Prochlorococcus marinus (strain MIT 9515).